The chain runs to 503 residues: DEAD-box ATP-dependent RNA helicase CshA (503 aa).

Positions Gln-2–Lys-30 match the Q motif motif. Residues Ile-33–Val-203 enclose the Helicase ATP-binding domain. Ala-46–Thr-53 lines the ATP pocket. Positions Asp-150–Asp-153 match the DEAD box motif. The Helicase C-terminal domain occupies Gln-214–Leu-375. The tract at residues Glu-436–Lys-503 is disordered. The segment covering Lys-466–Thr-480 has biased composition (basic residues). Residues Asp-481–Arg-490 are compositionally biased toward basic and acidic residues.

The protein belongs to the DEAD box helicase family. CshA subfamily. As to quaternary structure, oligomerizes, may be a member of the RNA degradosome.

It localises to the cytoplasm. It carries out the reaction ATP + H2O = ADP + phosphate + H(+). In terms of biological role, DEAD-box RNA helicase possibly involved in RNA degradation. Unwinds dsRNA in both 5'- and 3'-directions, has RNA-dependent ATPase activity. In Staphylococcus haemolyticus (strain JCSC1435), this protein is DEAD-box ATP-dependent RNA helicase CshA.